The primary structure comprises 335 residues: Dye-decolorizing peroxidase (335 aa).

Asp149 acts as the Proton acceptor in catalysis. His222 contributes to the heme binding site. Residues Leu312 to Arg335 form a targeting peptide region.

Belongs to the DyP-type peroxidase family. In terms of assembly, homotetramer, presumably also in the encapsulin nanocompartment. It depends on heme b as a cofactor.

Its subcellular location is the encapsulin nanocompartment. It carries out the reaction 2 a phenolic donor + H2O2 = 2 a phenolic radical donor + 2 H2O. Its function is as follows. Cargo of a type 1 encapsulin nanocompartment in situ; this cargo protects against oxidative stress at low pH. When expressed in the cytoplasm (absence of the encapsulin shell gene) it is almost as protective as the intact nanocompartment; its encapsulation has a modest yet significant effect on protection against oxidative stress at low pH. A heme-dependent peroxidase, it probably does not have deferrochelatase activity. Converts guaiacol and H2O2 to tetraguaiacol, also acts on 2,2'-azino-bis(3-ethylbenzothiazoline-6-sulfonic acid) (ABTS). Retains peroxidase activity when encapsulated but has a reduced set of substrates; acts on ABTS but not guaiacol. The chain is Dye-decolorizing peroxidase from Mycobacterium tuberculosis (strain ATCC 25618 / H37Rv).